Here is a 248-residue protein sequence, read N- to C-terminus: 5'-nucleotidase SurE (248 aa).

A divalent metal cation-binding residues include Asp8, Asp9, Ser39, and Asn91.

Belongs to the SurE nucleotidase family. Requires a divalent metal cation as cofactor.

It is found in the cytoplasm. It catalyses the reaction a ribonucleoside 5'-phosphate + H2O = a ribonucleoside + phosphate. Its function is as follows. Nucleotidase that shows phosphatase activity on nucleoside 5'-monophosphates. The protein is 5'-nucleotidase SurE of Neisseria meningitidis serogroup C (strain 053442).